The sequence spans 200 residues: 3-isopropylmalate dehydratase small subunit (200 aa).

Belongs to the LeuD family. LeuD type 1 subfamily. Heterodimer of LeuC and LeuD.

It catalyses the reaction (2R,3S)-3-isopropylmalate = (2S)-2-isopropylmalate. The protein operates within amino-acid biosynthesis; L-leucine biosynthesis; L-leucine from 3-methyl-2-oxobutanoate: step 2/4. In terms of biological role, catalyzes the isomerization between 2-isopropylmalate and 3-isopropylmalate, via the formation of 2-isopropylmaleate. The chain is 3-isopropylmalate dehydratase small subunit from Yersinia pseudotuberculosis serotype I (strain IP32953).